The chain runs to 200 residues: Small heat shock protein hspG2 (200 aa).

Residues asparagine 33–isoleucine 200 enclose the sHSP domain. The tract at residues lysine 86 to serine 139 is disordered. Over residues glutamine 88–serine 101 the composition is skewed to low complexity. Over residues aspartate 106–aspartate 117 the composition is skewed to acidic residues.

This sequence belongs to the small heat shock protein (HSP20) family.

This chain is Small heat shock protein hspG2 (hspG2), found in Dictyostelium discoideum (Social amoeba).